The sequence spans 733 residues: Acyl-coenzyme A oxidase (733 aa).

Belongs to the acyl-CoA oxidase family. The cofactor is FAD.

Its subcellular location is the peroxisome. It catalyses the reaction a 2,3-saturated acyl-CoA + O2 = a (2E)-enoyl-CoA + H2O2. Its pathway is lipid metabolism; peroxisomal fatty acid beta-oxidation. The protein is Acyl-coenzyme A oxidase (POX1) of Eremothecium gossypii (strain ATCC 10895 / CBS 109.51 / FGSC 9923 / NRRL Y-1056) (Yeast).